Consider the following 511-residue polypeptide: Putative polyol transporter 1 (511 aa).

12 helical membrane-spanning segments follow: residues 27–47, 63–83, 94–114, 124–144, 151–171, 186–206, 284–304, 324–344, 351–371, 384–404, 424–444, and 454–474; these read FACA…IGVM, VQLE…SGAA, YTIV…GFAT, FVAG…TAEV, GFLT…GYVS, FMLG…LAMP, ILIA…DAVV, LATV…TCVV, ALLL…GTSL, WAIG…SIGA, GASL…MTFL, and GAFL…FTFL.

The protein belongs to the major facilitator superfamily. Sugar transporter (TC 2.A.1.1) family.

The protein localises to the membrane. Functionally, plasma membrane sugar-proton symporter. The chain is Putative polyol transporter 1 (PLT1) from Arabidopsis thaliana (Mouse-ear cress).